The sequence spans 432 residues: Adenylosuccinate synthetase (432 aa).

GTP is bound by residues 13 to 19 (GDEGKGK) and 41 to 43 (GHT). Aspartate 14 functions as the Proton acceptor in the catalytic mechanism. Residues aspartate 14 and glycine 41 each coordinate Mg(2+). IMP contacts are provided by residues 14 to 17 (DEGK), 39 to 42 (NAGH), threonine 130, arginine 144, glutamine 225, threonine 240, and arginine 304. Histidine 42 acts as the Proton donor in catalysis. 300–306 (AVTGRPR) lines the substrate pocket. GTP contacts are provided by residues arginine 306, 332–334 (KLD), and 415–417 (STG).

This sequence belongs to the adenylosuccinate synthetase family. Homodimer. It depends on Mg(2+) as a cofactor.

Its subcellular location is the cytoplasm. It carries out the reaction IMP + L-aspartate + GTP = N(6)-(1,2-dicarboxyethyl)-AMP + GDP + phosphate + 2 H(+). It functions in the pathway purine metabolism; AMP biosynthesis via de novo pathway; AMP from IMP: step 1/2. In terms of biological role, plays an important role in the de novo pathway of purine nucleotide biosynthesis. Catalyzes the first committed step in the biosynthesis of AMP from IMP. The protein is Adenylosuccinate synthetase of Actinobacillus pleuropneumoniae serotype 3 (strain JL03).